We begin with the raw amino-acid sequence, 101 residues long: Small ribosomal subunit protein uS14 (101 aa).

This sequence belongs to the universal ribosomal protein uS14 family. Part of the 30S ribosomal subunit. Contacts proteins S3 and S10.

Its function is as follows. Binds 16S rRNA, required for the assembly of 30S particles and may also be responsible for determining the conformation of the 16S rRNA at the A site. The chain is Small ribosomal subunit protein uS14 from Pseudomonas aeruginosa (strain LESB58).